The sequence spans 306 residues: Ornithine carbamoyltransferase (306 aa).

Carbamoyl phosphate contacts are provided by residues S46–T49, Q73, R97, and H124–Q127. L-ornithine-binding positions include N156, D220, and S224–M225. Residues C260–L261 and R288 each bind carbamoyl phosphate.

The protein belongs to the aspartate/ornithine carbamoyltransferase superfamily. OTCase family.

It localises to the cytoplasm. The catalysed reaction is carbamoyl phosphate + L-ornithine = L-citrulline + phosphate + H(+). The protein operates within amino-acid degradation; L-arginine degradation via ADI pathway; carbamoyl phosphate from L-arginine: step 2/2. In terms of biological role, reversibly catalyzes the transfer of the carbamoyl group from carbamoyl phosphate (CP) to the N(epsilon) atom of ornithine (ORN) to produce L-citrulline. The sequence is that of Ornithine carbamoyltransferase from Campylobacter jejuni subsp. doylei (strain ATCC BAA-1458 / RM4099 / 269.97).